Reading from the N-terminus, the 293-residue chain is Cytosolic Fe-S cluster assembly factor CFD1 (293 aa).

Position 25 to 32 (25 to 32 (GKGGVGKS)) interacts with ATP. Residues Cys201 and Cys204 each contribute to the [4Fe-4S] cluster site. Ser291 carries the phosphoserine modification.

This sequence belongs to the Mrp/NBP35 ATP-binding proteins family. NUBP2/CFD1 subfamily. As to quaternary structure, heterotetramer of 2 NBP35 and 2 CFD1 chains. The cofactor is [4Fe-4S] cluster.

The protein resides in the cytoplasm. Functionally, component of the cytosolic iron-sulfur (Fe/S) protein assembly (CIA) machinery. Required for maturation of extramitochondrial Fe-S proteins. The NBP35-CFD1 heterotetramer forms a Fe-S scaffold complex, mediating the de novo assembly of an Fe-S cluster and its transfer to target apoproteins. Nucleotide binding/hydrolysis seems to be critcal for loading of Fe-S clusters onto CFD1 and NBP35. Required for biogenesis and export of both ribosomal subunits, which may reflect a role in assembly of the Fe/S clusters in RLI1, a protein which performs rRNA processing and ribosome export. This Saccharomyces cerevisiae (strain ATCC 204508 / S288c) (Baker's yeast) protein is Cytosolic Fe-S cluster assembly factor CFD1.